Consider the following 287-residue polypeptide: Ethylene-inducing xylanase 3 (287 aa).

The signal sequence occupies residues 1–19; the sequence is MVCFSSLFVAASAIAVVFA. Residues 31-219 enclose the GH11 domain; the sequence is QSTPSSQGTH…SSGSARINVA (189 aa). The active-site Nucleophile is glutamate 115. Catalysis depends on glutamate 206, which acts as the Proton donor. Residues 252–287 form the CBM1 domain; the sequence is SCAARWGQCGGSGWNGATCCSAGTCQAQNQWYSQCL.

The protein belongs to the glycosyl hydrolase 11 (cellulase G) family.

The enzyme catalyses Endohydrolysis of (1-&gt;4)-beta-D-xylosidic linkages in xylans.. Its pathway is glycan degradation; xylan degradation. Endo-1,4-beta-xylanase involved in the hydrolysis of xylan, a major structural heterogeneous polysaccharide found in plant biomass representing the second most abundant polysaccharide in the biosphere, after cellulose. Exhibits immunity-inducing activity and induces cell death in Nicotiana benthamiana. In Verticillium longisporum (Verticillium dahliae var. longisporum), this protein is Ethylene-inducing xylanase 3.